Reading from the N-terminus, the 890-residue chain is Alanine--tRNA ligase (890 aa).

Zn(2+)-binding residues include His572, His576, Cys674, and His678.

It belongs to the class-II aminoacyl-tRNA synthetase family. The cofactor is Zn(2+).

It localises to the cytoplasm. The enzyme catalyses tRNA(Ala) + L-alanine + ATP = L-alanyl-tRNA(Ala) + AMP + diphosphate. Its function is as follows. Catalyzes the attachment of alanine to tRNA(Ala) in a two-step reaction: alanine is first activated by ATP to form Ala-AMP and then transferred to the acceptor end of tRNA(Ala). Also edits incorrectly charged Ser-tRNA(Ala) and Gly-tRNA(Ala) via its editing domain. The protein is Alanine--tRNA ligase of Saccharopolyspora erythraea (strain ATCC 11635 / DSM 40517 / JCM 4748 / NBRC 13426 / NCIMB 8594 / NRRL 2338).